The primary structure comprises 397 residues: uncharacterized protein (397 aa).

Positions 368–391 are disordered; sequence TTKPGLHQPTQKRPTQTTSKPYIN. A compositionally biased stretch (polar residues) spans 375 to 388; that stretch reads QPTQKRPTQTTSKP.

This is an uncharacterized protein from Acanthamoeba polyphaga mimivirus (APMV).